The sequence spans 39 residues: DECANAAAQCSITLCNLYCGPLIEICELTVMQNCEPPFS.

3 disulfides stabilise this stretch: Cys-3/Cys-19, Cys-10/Cys-34, and Cys-15/Cys-26.

In terms of assembly, homodimer.

It is found in the secreted. Functionally, mating ciliate pheromones (or gamones) are diffusible extracellular communication signals that distinguish different intraspecific classes of cells commonly referred to as 'mating types'. They prepare the latter for conjugation by changing their cell surface properties. The chain is Mating pheromone Er-11 (MAT11) from Euplotes raikovi.